A 276-amino-acid polypeptide reads, in one-letter code: Tryptophan synthase alpha chain (276 aa).

Residues Glu49 and Asp60 each act as proton acceptor in the active site.

Belongs to the TrpA family. As to quaternary structure, tetramer of two alpha and two beta chains.

The catalysed reaction is (1S,2R)-1-C-(indol-3-yl)glycerol 3-phosphate + L-serine = D-glyceraldehyde 3-phosphate + L-tryptophan + H2O. Its pathway is amino-acid biosynthesis; L-tryptophan biosynthesis; L-tryptophan from chorismate: step 5/5. The alpha subunit is responsible for the aldol cleavage of indoleglycerol phosphate to indole and glyceraldehyde 3-phosphate. The protein is Tryptophan synthase alpha chain of Acidiphilium cryptum (strain JF-5).